Reading from the N-terminus, the 298-residue chain is Small ribosomal subunit protein uS2 (298 aa).

It belongs to the universal ribosomal protein uS2 family.

In Leifsonia xyli subsp. xyli (strain CTCB07), this protein is Small ribosomal subunit protein uS2.